A 572-amino-acid chain; its full sequence is Proline--tRNA ligase (572 aa).

The protein belongs to the class-II aminoacyl-tRNA synthetase family. ProS type 1 subfamily. In terms of assembly, homodimer.

The protein resides in the cytoplasm. The catalysed reaction is tRNA(Pro) + L-proline + ATP = L-prolyl-tRNA(Pro) + AMP + diphosphate. In terms of biological role, catalyzes the attachment of proline to tRNA(Pro) in a two-step reaction: proline is first activated by ATP to form Pro-AMP and then transferred to the acceptor end of tRNA(Pro). As ProRS can inadvertently accommodate and process non-cognate amino acids such as alanine and cysteine, to avoid such errors it has two additional distinct editing activities against alanine. One activity is designated as 'pretransfer' editing and involves the tRNA(Pro)-independent hydrolysis of activated Ala-AMP. The other activity is designated 'posttransfer' editing and involves deacylation of mischarged Ala-tRNA(Pro). The misacylated Cys-tRNA(Pro) is not edited by ProRS. This is Proline--tRNA ligase from Citrobacter koseri (strain ATCC BAA-895 / CDC 4225-83 / SGSC4696).